Consider the following 571-residue polypeptide: RUN and FYVE domain-containing protein 4 (571 aa).

Positions 33–166 (TDTSAELHRL…VAFELDLQQP (134 aa)) constitute an RUN domain. The segment at 174–207 (MFSESRCSSSTQTQGRRPRKNKDAPKKIPAAYGG) is disordered. The segment covering 178–188 (SRCSSSTQTQG) has biased composition (polar residues). Residues 408–481 (EVSLQDEIKS…ERRDAMYQEE (74 aa)) are a coiled coil. An FYVE-type zinc finger spans residues 474 to 567 (RDAMYQEELG…CCPPCAQGRE (94 aa)). Positions 521, 524, 537, 540, 545, 548, 559, and 562 each coordinate Zn(2+).

Forms homodimers (via coiled coil domain). Interacts with RAB7A. Forms a ternary complex with RAB7A and LAMP2; the interaction with RAB7A is mediated by RUFY4 (via RUN and coiled coil domains). Interacts with GTP-, but not GDP-bound ARL8A and ARL8B. Interacts with dynactin/DCTN1 and the dynein intermediate chain DYNC1I1/2.

The protein localises to the cytoplasmic vesicle. It localises to the autophagosome. Its subcellular location is the lysosome. In terms of biological role, ARL8 effector that promotes the coupling of endolysosomes to dynein-dynactin for retrograde transport along microtubules. Acts by binding both GTP-bound ARL8 and dynein-dynactin. In nonneuronal cells, promotes concentration of endolysosomes in the juxtanuclear area. In hippocampal neurons, drives retrograde transport of endolysosomes from the axon to the soma. Positive regulator of macroautophagy in dendritic cells. Increases autophagic flux, probably by stimulating both autophagosome formation and facilitating tethering with lysosomes. Binds to phosphatidylinositol 3-phosphate (PtdIns3P) through its FYVE-type zinc finger. Positive regulator of osteosclast bone-resorbing activity, possibly by promoting late endosome-lysosome fusion by acting as an adapter protein between RAB7A on late endosomes and LAMP2 on primary lysosomes. The polypeptide is RUN and FYVE domain-containing protein 4 (RUFY4) (Homo sapiens (Human)).